Reading from the N-terminus, the 101-residue chain is NADH-quinone oxidoreductase subunit K (101 aa).

3 helical membrane-spanning segments follow: residues 4–24, 30–50, and 61–81; these read LSHYLVLGAVLFAIGVVGIFL, IILLMSIELMLLAVNINFVAF, and IFVFFILTVAAAEAAIGLAIL.

It belongs to the complex I subunit 4L family. In terms of assembly, NDH-1 is composed of 14 different subunits. Subunits NuoA, H, J, K, L, M, N constitute the membrane sector of the complex.

Its subcellular location is the cell inner membrane. The enzyme catalyses a quinone + NADH + 5 H(+)(in) = a quinol + NAD(+) + 4 H(+)(out). Functionally, NDH-1 shuttles electrons from NADH, via FMN and iron-sulfur (Fe-S) centers, to quinones in the respiratory chain. The immediate electron acceptor for the enzyme in this species is believed to be ubiquinone. Couples the redox reaction to proton translocation (for every two electrons transferred, four hydrogen ions are translocated across the cytoplasmic membrane), and thus conserves the redox energy in a proton gradient. This chain is NADH-quinone oxidoreductase subunit K, found in Nitrosomonas eutropha (strain DSM 101675 / C91 / Nm57).